Consider the following 514-residue polypeptide: MTTTKRPIALLILDGWGYRENTHMNAIYHANTPVLDRLNAQYAHGLISGSGLDVGLPDGQMGNSEVGHINLGSGRIVYQELTRISKAIADHEFEQNPALCDAVDVAVKAGGAVHIMGLLSPGGVHSHEEHIEAMCRMAVARGATKVYLHAFLDGRDTPPRSAKGSLSHFDDLFTTLGHGRIASIIGRYFAMDRDNRWDRVSQAYDLITQGKAKFQYDNAVTALEAAYERNENDEFVSSSAITDSEGKVASLNDGDALIFMNFRADRARQITRSFINADFDGFERAVTPKVNFVTLTEYAADIKAPIAYPSENLVNTLGEVLQNRGRTQLRISETEKYAHVTFFFNGGKEEPFNGEDRILINSPKVATYDLQPEMSSTELTDKLVAAIESAQYDVIICNYPNGDMVGHTGNFDAAVKACEAVDACIGRVVDALAKVGGECIITADHGNAEQMTDETTGQAHTAHTSELVPFVFVGRDATIDEGGKLSDVAPTILHLMGETIPAEMTGKPLIHVKE.

Residues Asp14 and Ser64 each contribute to the Mn(2+) site. Ser64 acts as the Phosphoserine intermediate in catalysis. Substrate-binding positions include His125, 155 to 156 (RD), Arg187, Arg193, 263 to 266 (RADR), and Lys336. Positions 403, 407, 444, 445, and 463 each coordinate Mn(2+).

It belongs to the BPG-independent phosphoglycerate mutase family. As to quaternary structure, monomer. It depends on Mn(2+) as a cofactor.

The enzyme catalyses (2R)-2-phosphoglycerate = (2R)-3-phosphoglycerate. Its pathway is carbohydrate degradation; glycolysis; pyruvate from D-glyceraldehyde 3-phosphate: step 3/5. Its function is as follows. Catalyzes the interconversion of 2-phosphoglycerate and 3-phosphoglycerate. The chain is 2,3-bisphosphoglycerate-independent phosphoglycerate mutase from Shewanella sp. (strain MR-4).